The chain runs to 269 residues: Formamidopyrimidine-DNA glycosylase (269 aa).

Pro-2 serves as the catalytic Schiff-base intermediate with DNA. The active-site Proton donor is Glu-3. The active-site Proton donor; for beta-elimination activity is Lys-57. Residues His-90, Arg-109, and Lys-150 each contribute to the DNA site. An FPG-type zinc finger spans residues 235–269; sequence QVYGKAGEPCPECGEAIQEQKIGQRNTFYCSYCQC. Catalysis depends on Arg-259, which acts as the Proton donor; for delta-elimination activity.

It belongs to the FPG family. As to quaternary structure, monomer. The cofactor is Zn(2+).

It carries out the reaction Hydrolysis of DNA containing ring-opened 7-methylguanine residues, releasing 2,6-diamino-4-hydroxy-5-(N-methyl)formamidopyrimidine.. It catalyses the reaction 2'-deoxyribonucleotide-(2'-deoxyribose 5'-phosphate)-2'-deoxyribonucleotide-DNA = a 3'-end 2'-deoxyribonucleotide-(2,3-dehydro-2,3-deoxyribose 5'-phosphate)-DNA + a 5'-end 5'-phospho-2'-deoxyribonucleoside-DNA + H(+). In terms of biological role, involved in base excision repair of DNA damaged by oxidation or by mutagenic agents. Acts as a DNA glycosylase that recognizes and removes damaged bases. Has a preference for oxidized purines, such as 7,8-dihydro-8-oxoguanine (8-oxoG). Has AP (apurinic/apyrimidinic) lyase activity and introduces nicks in the DNA strand. Cleaves the DNA backbone by beta-delta elimination to generate a single-strand break at the site of the removed base with both 3'- and 5'-phosphates. This Vibrio vulnificus (strain CMCP6) protein is Formamidopyrimidine-DNA glycosylase.